The sequence spans 574 residues: K(+)/H(+) antiporter NhaP2 (574 aa).

Transmembrane regions (helical) follow at residues 6 to 26, 34 to 54, 58 to 78, 87 to 107, 109 to 129, 173 to 193, 196 to 216, 219 to 239, 242 to 262, 271 to 291, 299 to 319, 335 to 355, and 359 to 379; these read INSF…LSPV, ILLI…GGIL, YSTA…DGGM, VALW…TSIT, VMAA…GAIV, IAIL…ISFI, FGLG…LVNL, LAEG…YAAS, LGGS…NKPT, VLDG…GLLL, IWLP…PLAV, WFIS…VFPM, and LPGA…SLLV. Residues 405 to 486 form the RCK C-terminal domain; the sequence is SGVEIYPSSE…LEALSNLFSQ (82 aa).

It belongs to the monovalent cation:proton antiporter 1 (CPA1) transporter (TC 2.A.36) family. NhaP2 subfamily.

It is found in the cell inner membrane. It catalyses the reaction K(+)(in) + H(+)(out) = K(+)(out) + H(+)(in). Its function is as follows. K(+)/H(+) antiporter that extrudes potassium in exchange for external protons and maintains the internal concentration of potassium under toxic levels. The protein is K(+)/H(+) antiporter NhaP2 of Shewanella sp. (strain MR-7).